Consider the following 380-residue polypeptide: ATPase ASNA1 homolog (380 aa).

Residue 48–55 (KGGVGKTT) participates in ATP binding. Residue Asp77 is part of the active site. ATP-binding residues include Glu248 and Asn275.

Belongs to the arsA ATPase family. In terms of assembly, homodimer.

It localises to the cytoplasm. The protein localises to the endoplasmic reticulum. Functionally, ATPase required for the post-translational delivery of tail-anchored (TA) proteins to the endoplasmic reticulum. Recognizes and selectively binds the transmembrane domain of TA proteins in the cytosol. This complex then targets to the endoplasmic reticulum by membrane-bound receptors, where the tail-anchored protein is released for insertion. This process is regulated by ATP binding and hydrolysis. ATP binding drives the homodimer towards the closed dimer state, facilitating recognition of newly synthesized TA membrane proteins. ATP hydrolysis is required for insertion. Subsequently, the homodimer reverts towards the open dimer state, lowering its affinity for the membrane-bound receptor, and returning it to the cytosol to initiate a new round of targeting. In Plasmodium yoelii yoelii, this protein is ATPase ASNA1 homolog.